A 211-amino-acid chain; its full sequence is Protein-L-isoaspartate O-methyltransferase (211 aa).

The active site involves serine 60.

The protein belongs to the methyltransferase superfamily. L-isoaspartyl/D-aspartyl protein methyltransferase family.

It localises to the cytoplasm. The enzyme catalyses [protein]-L-isoaspartate + S-adenosyl-L-methionine = [protein]-L-isoaspartate alpha-methyl ester + S-adenosyl-L-homocysteine. Its function is as follows. Catalyzes the methyl esterification of L-isoaspartyl residues in peptides and proteins that result from spontaneous decomposition of normal L-aspartyl and L-asparaginyl residues. It plays a role in the repair and/or degradation of damaged proteins. The chain is Protein-L-isoaspartate O-methyltransferase from Pseudomonas fluorescens (strain SBW25).